A 215-amino-acid chain; its full sequence is MKKLLYITVNSKPEELSASKTVGRAFVNRFLEKHSDFEIEELDLYKCHIPRLEYEYFEKRSCLVNEDAFNKLDKKQQEEVHKIVKLTDQFKEADVYVIAAPMWSMSFPAPLKEYIDCIVMDGKTVDIKDGEKPEGLLNDKPRGAVYIQSSGAKMNVLLKVVMDKGVHYIESIMKFMGIEKFEELLVDGTGTTEEEKNKAIEKAFEKIDSVIDGIW.

17–19 is a binding site for FMN; that stretch reads SAS.

Belongs to the azoreductase type 1 family. As to quaternary structure, homodimer. FMN serves as cofactor.

The enzyme catalyses 2 a quinone + NADH + H(+) = 2 a 1,4-benzosemiquinone + NAD(+). It catalyses the reaction N,N-dimethyl-1,4-phenylenediamine + anthranilate + 2 NAD(+) = 2-(4-dimethylaminophenyl)diazenylbenzoate + 2 NADH + 2 H(+). Quinone reductase that provides resistance to thiol-specific stress caused by electrophilic quinones. Functionally, also exhibits azoreductase activity. Catalyzes the reductive cleavage of the azo bond in aromatic azo compounds to the corresponding amines. The chain is FMN-dependent NADH:quinone oxidoreductase from Clostridium botulinum (strain Eklund 17B / Type B).